The sequence spans 217 residues: Lipid A acyltransferase PagP (217 aa).

The first 24 residues, 1-24 (MYLKRILITLSLITLPIVPCLSYA), serve as a signal peptide directing secretion. Active-site residues include His-89, Asp-132, and Ser-133.

This sequence belongs to the lipid A palmitoyltransferase family. As to quaternary structure, homodimer.

It localises to the cell outer membrane. It carries out the reaction a lipid A + a 1,2-diacyl-sn-glycero-3-phosphocholine = a hepta-acyl lipid A + a 2-acyl-sn-glycero-3-phosphocholine. The catalysed reaction is a lipid IVA + a 1,2-diacyl-sn-glycero-3-phosphocholine = a lipid IVB + a 2-acyl-sn-glycero-3-phosphocholine. The enzyme catalyses a lipid IIA + a 1,2-diacyl-sn-glycero-3-phosphocholine = a lipid IIB + a 2-acyl-sn-glycero-3-phosphocholine. Transfers a fatty acid residue from the sn-1 position of a phospholipid to the N-linked hydroxyfatty acid chain on the proximal unit of lipid A or its precursors. This is Lipid A acyltransferase PagP from Pectobacterium atrosepticum (strain SCRI 1043 / ATCC BAA-672) (Erwinia carotovora subsp. atroseptica).